The sequence spans 146 residues: Protein phosphatase 1 regulatory subunit 14D (146 aa).

The span at 1–16 (MLSSSAASCTSPNPDT) shows a compositional bias: polar residues. A disordered region spans residues 1–57 (MLSSSAASCTSPNPDTDNPDKKVRWSSEKRRRASSTDSESKTHLDISKLPRSRRPSR). Basic and acidic residues-rich tracts occupy residues 18 to 28 (NPDKKVRWSSE) and 38 to 48 (SESKTHLDISK). An interaction with protein phosphatase 1 region spans residues 21–25 (KKVRW).

It belongs to the PP1 inhibitor family. Post-translationally, phosphorylated on several residues.

It is found in the cytoplasm. Its function is as follows. Inhibitor of PPP1CA. Has inhibitory activity only when phosphorylated, creating a molecular switch for regulating the phosphorylation status of PPP1CA substrates and smooth muscle contraction. This is Protein phosphatase 1 regulatory subunit 14D (Ppp1r14d) from Rattus norvegicus (Rat).